Reading from the N-terminus, the 71-residue chain is NAD(P)H-quinone oxidoreductase subunit O (71 aa).

This sequence belongs to the complex I NdhO subunit family. As to quaternary structure, NDH-1 can be composed of about 15 different subunits; different subcomplexes with different compositions have been identified which probably have different functions.

It is found in the cellular thylakoid membrane. It catalyses the reaction a plastoquinone + NADH + (n+1) H(+)(in) = a plastoquinol + NAD(+) + n H(+)(out). The enzyme catalyses a plastoquinone + NADPH + (n+1) H(+)(in) = a plastoquinol + NADP(+) + n H(+)(out). In terms of biological role, NDH-1 shuttles electrons from an unknown electron donor, via FMN and iron-sulfur (Fe-S) centers, to quinones in the respiratory and/or the photosynthetic chain. The immediate electron acceptor for the enzyme in this species is believed to be plastoquinone. Couples the redox reaction to proton translocation, and thus conserves the redox energy in a proton gradient. Cyanobacterial NDH-1 also plays a role in inorganic carbon-concentration. In Microcystis aeruginosa (strain NIES-843 / IAM M-2473), this protein is NAD(P)H-quinone oxidoreductase subunit O.